The primary structure comprises 720 residues: Polyribonucleotide nucleotidyltransferase (720 aa).

Mg(2+)-binding residues include Asp485 and Asp491. Residues 552–615 (PRIHTIKINP…EAIRRIQALT (64 aa)) form the KH domain. The region spanning 621 to 689 (GRIYEGKVTR…RQGRIRLSIK (69 aa)) is the S1 motif domain. The segment at 697–720 (PAAESVAESAPAQEAVVEQVPMTE) is disordered. Low complexity predominate over residues 698–720 (AAESVAESAPAQEAVVEQVPMTE).

It belongs to the polyribonucleotide nucleotidyltransferase family. In terms of assembly, component of the RNA degradosome, which is a multiprotein complex involved in RNA processing and mRNA degradation. Mg(2+) is required as a cofactor.

It is found in the cytoplasm. It catalyses the reaction RNA(n+1) + phosphate = RNA(n) + a ribonucleoside 5'-diphosphate. Functionally, involved in mRNA degradation. Catalyzes the phosphorolysis of single-stranded polyribonucleotides processively in the 3'- to 5'-direction. The polypeptide is Polyribonucleotide nucleotidyltransferase (Tolumonas auensis (strain DSM 9187 / NBRC 110442 / TA 4)).